The primary structure comprises 464 residues: Chromosomal replication initiator protein DnaA (464 aa).

Residues 1–90 (MNNDNTEVLE…KYWQDEDQSI (90 aa)) form a domain I, interacts with DnaA modulators region. The domain II stretch occupies residues 90-126 (ICSVDICVVSNQDPNLLVDIKDRVDRGIKGNCDNVSS). A domain III, AAA+ region region spans residues 127-345 (PLDPRFTFDN…GALNKVVAHS (219 aa)). G173, G175, K176, and T177 together coordinate ATP. A domain IV, binds dsDNA region spans residues 346-464 (SLVGCSITLD…DINLLNRMLR (119 aa)).

It belongs to the DnaA family. Oligomerizes as a right-handed, spiral filament on DNA at oriC.

It is found in the cytoplasm. Plays an essential role in the initiation and regulation of chromosomal replication. ATP-DnaA binds to the origin of replication (oriC) to initiate formation of the DNA replication initiation complex once per cell cycle. Binds the DnaA box (a 9 base pair repeat at the origin) and separates the double-stranded (ds)DNA. Forms a right-handed helical filament on oriC DNA; dsDNA binds to the exterior of the filament while single-stranded (ss)DNA is stabiized in the filament's interior. The ATP-DnaA-oriC complex binds and stabilizes one strand of the AT-rich DNA unwinding element (DUE), permitting loading of DNA polymerase. After initiation quickly degrades to an ADP-DnaA complex that is not apt for DNA replication. Binds acidic phospholipids. This Ehrlichia ruminantium (strain Gardel) protein is Chromosomal replication initiator protein DnaA.